Consider the following 348-residue polypeptide: tRNA pseudouridine synthase D (348 aa).

Position 27 (Phe27) interacts with substrate. Asp80 acts as the Nucleophile in catalysis. Residue Asn129 participates in substrate binding. The TRUD domain maps to 155-303; it reads GVPNYFGSQR…VEPARRAVLL (149 aa). Phe329 lines the substrate pocket.

The protein belongs to the pseudouridine synthase TruD family.

The catalysed reaction is uridine(13) in tRNA = pseudouridine(13) in tRNA. In terms of biological role, responsible for synthesis of pseudouridine from uracil-13 in transfer RNAs. The chain is tRNA pseudouridine synthase D from Pectobacterium atrosepticum (strain SCRI 1043 / ATCC BAA-672) (Erwinia carotovora subsp. atroseptica).